The sequence spans 102 residues: Small ribosomal subunit protein uS10 (102 aa).

The protein belongs to the universal ribosomal protein uS10 family. Part of the 30S ribosomal subunit.

Its function is as follows. Involved in the binding of tRNA to the ribosomes. This Methanocorpusculum labreanum (strain ATCC 43576 / DSM 4855 / Z) protein is Small ribosomal subunit protein uS10.